The following is a 233-amino-acid chain: Ycf53-like protein (233 aa).

It belongs to the ycf53 family.

The polypeptide is Ycf53-like protein (Synechocystis sp. (strain ATCC 27184 / PCC 6803 / Kazusa)).